Reading from the N-terminus, the 349-residue chain is DNA polymerase IV (349 aa).

The region spanning 7–188 (IIHIDMDYFF…LPVKKLFGVG (182 aa)) is the UmuC domain. Positions 11 and 106 each coordinate Mg(2+). Glu-107 is an active-site residue.

Belongs to the DNA polymerase type-Y family. Monomer. Mg(2+) serves as cofactor.

The protein localises to the cytoplasm. The enzyme catalyses DNA(n) + a 2'-deoxyribonucleoside 5'-triphosphate = DNA(n+1) + diphosphate. Its function is as follows. Poorly processive, error-prone DNA polymerase involved in untargeted mutagenesis. Copies undamaged DNA at stalled replication forks, which arise in vivo from mismatched or misaligned primer ends. These misaligned primers can be extended by PolIV. Exhibits no 3'-5' exonuclease (proofreading) activity. May be involved in translesional synthesis, in conjunction with the beta clamp from PolIII. The chain is DNA polymerase IV from Francisella tularensis subsp. novicida (strain U112).